A 186-amino-acid chain; its full sequence is Ribosome-recycling factor (186 aa).

It belongs to the RRF family.

It localises to the cytoplasm. Functionally, responsible for the release of ribosomes from messenger RNA at the termination of protein biosynthesis. May increase the efficiency of translation by recycling ribosomes from one round of translation to another. The chain is Ribosome-recycling factor from Prosthecochloris aestuarii (strain DSM 271 / SK 413).